The chain runs to 730 residues: Aspyridones cluster regulator apdR (730 aa).

The segment at residues 20–46 (CTECRRRKIRCDQATPCRHCEKAALRC) is a DNA-binding region (zn(2)-C6 fungal-type).

Its subcellular location is the nucleus. Its function is as follows. Transcription factor involved in regulation of gene cluster that mediates the biosynthesis of aspyridones. This Emericella nidulans (strain FGSC A4 / ATCC 38163 / CBS 112.46 / NRRL 194 / M139) (Aspergillus nidulans) protein is Aspyridones cluster regulator apdR.